Consider the following 65-residue polypeptide: MASISVDSNESIDKALRRFNKAVQADGILTEARRREHYEKPSVKRKRKEAARLRKLQKMAREANN.

Residues 33-42 show a composition bias toward basic and acidic residues; the sequence is RRREHYEKPS. The disordered stretch occupies residues 33–65; sequence RRREHYEKPSVKRKRKEAARLRKLQKMAREANN. Residues 43 to 58 are compositionally biased toward basic residues; sequence VKRKRKEAARLRKLQK.

It belongs to the bacterial ribosomal protein bS21 family.

This is Small ribosomal subunit protein bS21 from Herpetosiphon aurantiacus (strain ATCC 23779 / DSM 785 / 114-95).